The sequence spans 320 residues: Protein phosphatase PTC7 homolog fig (320 aa).

In terms of domain architecture, PPM-type phosphatase spans 49-315 (PYLVTAVQGR…DDITLILASV (267 aa)). Positions 93, 94, and 238 each coordinate Mn(2+).

It belongs to the PP2C family. The cofactor is Mg(2+). Mn(2+) is required as a cofactor.

It carries out the reaction O-phospho-L-seryl-[protein] + H2O = L-seryl-[protein] + phosphate. The enzyme catalyses O-phospho-L-threonyl-[protein] + H2O = L-threonyl-[protein] + phosphate. The chain is Protein phosphatase PTC7 homolog fig from Drosophila yakuba (Fruit fly).